The chain runs to 424 residues: MAKNIQAIRGMNDYLPGETAIWQRIEGTLKNVLGSYGYSEIRLPIVEQTPLFKRAIGEVTDVVEKEMYTFEDRNGDSLTLRPEGTAGCVRAGIEHGLLYNQEQRLWYIGPMFRHERPQKGRYRQFHQLGCEVFGLQGPDIDAELIMLTARWWRALGIFEHVTLELNSIGSLEARANYRDALVAFLEQHKEKLDEDCKRRMYTNPLRVLDSKNPEVQALLNDAPALGDYLDEESREHFAGLCKLLESAGIAYTVNQRLVRGLDYYNRTVFEWVTNSLGSQGTVCAGGRYDGLVEQLGGRATPAVGFAMGLERLVLLVQAVNPEFKADPVVDIYLVASGADTQSAAMALAERLRDELPGVKLMTNHGGGNFKKQFARADKWGARVAVVLGESEVANGTAVVKDLRSGEQTAVAQDSVAAHLRTLLG.

The protein belongs to the class-II aminoacyl-tRNA synthetase family. As to quaternary structure, homodimer.

Its subcellular location is the cytoplasm. The enzyme catalyses tRNA(His) + L-histidine + ATP = L-histidyl-tRNA(His) + AMP + diphosphate + H(+). The chain is Histidine--tRNA ligase from Shigella sonnei (strain Ss046).